The primary structure comprises 240 residues: Small ribosomal subunit protein uS3 (240 aa).

A KH type-2 domain is found at 21-92 (LNEFFTRELA…TIVLYAERVQ (72 aa)). Residues Thr-44 and Thr-70 each carry the phosphothreonine modification. Position 97 is a phosphoserine (Ser-97). Residue Lys-106 forms a Glycyl lysine isopeptide (Lys-Gly) (interchain with G-Cter in ubiquitin) linkage. Ser-129 is subject to Phosphoserine. Residues Lys-132 and Lys-141 each participate in a glycyl lysine isopeptide (Lys-Gly) (interchain with G-Cter in ubiquitin) cross-link. The residue at position 146 (Arg-146) is an Omega-N-methylarginine; by SFM1. Residues Lys-151, Lys-200, and Lys-212 each participate in a glycyl lysine isopeptide (Lys-Gly) (interchain with G-Cter in ubiquitin) cross-link. The segment at 212-240 (KEEEPILAPSVKDYRPAEETEAQAEPVEA) is disordered. The residue at position 221 (Ser-221) is a Phosphoserine. Positions 230–240 (ETEAQAEPVEA) are enriched in acidic residues. Thr-231 is modified (phosphothreonine).

Belongs to the universal ribosomal protein uS3 family. Component of the small ribosomal subunit (SSU). Mature yeast ribosomes consist of a small (40S) and a large (60S) subunit. The 40S small subunit contains 1 molecule of ribosomal RNA (18S rRNA) and 33 different proteins (encoded by 57 genes). The large 60S subunit contains 3 rRNA molecules (25S, 5.8S and 5S rRNA) and 46 different proteins (encoded by 81 genes). In terms of processing, ubiquitinated at Lys-212 in response to stalled ribosomes. Ubiquitination leads to activation of the No-Go Decay (NGD) pathway and degradation of non-functional 18S rRNA: first monoubiquitinated at Lys-212 by MAG2, followed by formation of 'Lys-63'-linked polyubiquitin chains on monoubiquitin by HEL2 and RSP5.

The protein resides in the cytoplasm. Functionally, component of the ribosome, a large ribonucleoprotein complex responsible for the synthesis of proteins in the cell. The small ribosomal subunit (SSU) binds messenger RNAs (mRNAs) and translates the encoded message by selecting cognate aminoacyl-transfer RNA (tRNA) molecules. The large subunit (LSU) contains the ribosomal catalytic site termed the peptidyl transferase center (PTC), which catalyzes the formation of peptide bonds, thereby polymerizing the amino acids delivered by tRNAs into a polypeptide chain. The nascent polypeptides leave the ribosome through a tunnel in the LSU and interact with protein factors that function in enzymatic processing, targeting, and the membrane insertion of nascent chains at the exit of the ribosomal tunnel. This is Small ribosomal subunit protein uS3 from Saccharomyces cerevisiae (strain ATCC 204508 / S288c) (Baker's yeast).